We begin with the raw amino-acid sequence, 571 residues long: Coiled-coil domain-containing protein 22 homolog (571 aa).

Coiled coils occupy residues 406-434 and 509-571; these read MMDLQTKSAMHARLQKELEKLNRTVSRTA and CAEL…AHLR.

It belongs to the CCDC22 family.

The chain is Coiled-coil domain-containing protein 22 homolog from Culex quinquefasciatus (Southern house mosquito).